A 289-amino-acid chain; its full sequence is Membrane protein insertase YidC (289 aa).

The N-terminal stretch at 1–19 (MKKKALLPLLLGIMVFLAG) is a signal peptide. Residue cysteine 20 is the site of N-palmitoyl cysteine attachment. Residue cysteine 20 is the site of S-diacylglycerol cysteine attachment. A run of 5 helical transmembrane segments spans residues 55 to 75 (YGLA…PFML), 133 to 153 (MLGC…FFVL), 177 to 197 (IWIT…STFS), 210 to 230 (MIIS…ALGL), and 231 to 251 (YWSV…AYYS). The disordered stretch occupies residues 268 to 289 (EHGGSGNSKGAKVVSKKNKKKK).

It belongs to the OXA1/ALB3/YidC family. Type 2 subfamily.

Its subcellular location is the cell membrane. Functionally, required for the insertion and/or proper folding and/or complex formation of integral membrane proteins into the membrane. Involved in integration of membrane proteins that insert both dependently and independently of the Sec translocase complex, as well as at least some lipoproteins. This chain is Membrane protein insertase YidC, found in Staphylococcus carnosus (strain TM300).